Here is a 109-residue protein sequence, read N- to C-terminus: uncharacterized protein (109 aa).

It localises to the mitochondrion. This is an uncharacterized protein from Saccharomyces cerevisiae (strain ATCC 204508 / S288c) (Baker's yeast).